The following is a 670-amino-acid chain: Zinc finger protein 526 (670 aa).

C2H2-type zinc fingers lie at residues 57–79 (FMCS…QEQH), 108–130 (FQCG…QDAH), and 140–163 (YQCW…KAQH). Disordered regions lie at residues 168–196 (VAEP…KMEP) and 217–304 (GTHF…ATHP). Residues 171-189 (PPVPPPLPPPTPLPPPSPP) show a composition bias toward pro residues. Residues 197–219 (YECPECSTLCATPEEFLEHQGTH) form a C2H2-type 4 zinc finger. The segment covering 217 to 231 (GTHFDSLEKEERNGL) has biased composition (basic and acidic residues). Positions 232-263 (EEEEEDDEEDEEDDEEMEDEEAMAEVGDDAVG) are enriched in acidic residues. 9 consecutive C2H2-type zinc fingers follow at residues 305 to 327 (FHCS…GRAH), 332 to 354 (HECT…LRLH), 360 to 382 (YLCV…RRAH), 388 to 409 (HRCR…RRTH), 442 to 465 (LPCP…RAVH), 472 to 494 (HRCG…LRTH), 500 to 522 (FQCH…QLTH), 528 to 550 (YQCL…RRLH), and 573 to 595 (YYCG…QRVH). Positions 409–443 (HAGKSGAPPTGATAPPAPAEPTPPPPPPAPPAQLP) are disordered. A compositionally biased stretch (pro residues) spans 423–442 (PPAPAEPTPPPPPPAPPAQL). Positions 601–621 (LTLQPPRSPSPAPPPPPEPQQ) are disordered. Over residues 606-619 (PRSPSPAPPPPPEP) the composition is skewed to pro residues.

The protein belongs to the krueppel C2H2-type zinc-finger protein family. Widely expressed.

It localises to the nucleus. Functionally, may be involved in transcriptional regulation. This Homo sapiens (Human) protein is Zinc finger protein 526 (ZNF526).